A 301-amino-acid polypeptide reads, in one-letter code: Pyridoxal 5'-phosphate synthase subunit PdxS (301 aa).

A D-ribose 5-phosphate-binding site is contributed by D31. The Schiff-base intermediate with D-ribose 5-phosphate role is filled by K88. G160 contributes to the D-ribose 5-phosphate binding site. R172 is a binding site for D-glyceraldehyde 3-phosphate. D-ribose 5-phosphate contacts are provided by residues G221 and 242 to 243 (GS). Residues 273–301 (EIAKSPGKGMKGQANETLPEEEKLQDRGI) form a disordered region. Residues 292 to 301 (EEEKLQDRGI) are compositionally biased toward basic and acidic residues.

It belongs to the PdxS/SNZ family. In terms of assembly, in the presence of PdxT, forms a dodecamer of heterodimers.

It catalyses the reaction aldehydo-D-ribose 5-phosphate + D-glyceraldehyde 3-phosphate + L-glutamine = pyridoxal 5'-phosphate + L-glutamate + phosphate + 3 H2O + H(+). It participates in cofactor biosynthesis; pyridoxal 5'-phosphate biosynthesis. In terms of biological role, catalyzes the formation of pyridoxal 5'-phosphate from ribose 5-phosphate (RBP), glyceraldehyde 3-phosphate (G3P) and ammonia. The ammonia is provided by the PdxT subunit. Can also use ribulose 5-phosphate and dihydroxyacetone phosphate as substrates, resulting from enzyme-catalyzed isomerization of RBP and G3P, respectively. The sequence is that of Pyridoxal 5'-phosphate synthase subunit PdxS from Natronomonas pharaonis (strain ATCC 35678 / DSM 2160 / CIP 103997 / JCM 8858 / NBRC 14720 / NCIMB 2260 / Gabara) (Halobacterium pharaonis).